Here is an 89-residue protein sequence, read N- to C-terminus: Class I hydrophobin C (89 aa).

Residues 1-16 form the signal peptide; sequence MKFSLATIALAAAVAA. Intrachain disulfides connect Cys-28/Cys-68, Cys-39/Cys-60, Cys-40/Cys-52, and Cys-69/Cys-85. A glycan (N-linked (GlcNAc...) asparagine) is linked at Asn-36.

It belongs to the fungal hydrophobin family.

The protein localises to the secreted. The protein resides in the cell wall. It localises to the vacuole. Its subcellular location is the cytoplasmic vesicle. Functionally, aerial growth, conidiation, and dispersal of filamentous fungi in the environment rely upon a capability of their secreting small amphipathic proteins called hydrophobins (HPBs) with low sequence identity. Class I can self-assemble into an outermost layer of rodlet bundles on aerial cell surfaces, conferring cellular hydrophobicity that supports fungal growth, development and dispersal; whereas Class II form highly ordered films at water-air interfaces through intermolecular interactions but contribute nothing to the rodlet structure. Hyd1C contributes to certain cell wall-related features, such as hydrophobicity but is not involved in cell wall-related events during fungal proliferation in host hemocoel. Does not contribute to conidial hydrophobicity. This chain is Class I hydrophobin C, found in Beauveria bassiana (strain ARSEF 2860) (White muscardine disease fungus).